The chain runs to 578 residues: MRQQDAPKPTPAACRCSGLARRVLTIAFALLILGLMTWAYAAGVPLASDRYGLLAFGLYGAFLSAHLVAQSLFAYLEHRRVAAAARGPLDAATARSVALTISAYQEDPAYLRQCLASARALLYPRARLRVLMVVDGNRAEDLYMVDMFREVFADEDPATYVWDGNYHQPWEPAAAGAVGAGAYREVEAEDPGRLAVEALVRTRRCVCVAQRWGGKREVMYTAFKALGDSVDYVQVCDSDTRLDPMALLELVRVLDEDPRVGAVGGDVRILNPLDSWVSFLSSLRYWVAFNVERACQSYFHCVSCISGPLGLYRNNLLQQFLEAWYNQKFLGTHCTFGDDRHLTNRMLSMGYATKYTSRSRCYSETPSSFLRWLSQQTRWSKSYFREWLYNALWWHRHHAWMTYEAVVSGLFPFFVAATVLRLFYAGRPWALLWVLLCVQGVALAKAAFAAWLRGCLRMVLLSLYAPLYMCGLLPAKFLALVTMNQSGWGTSGRRKLAANYVPLLPLALWALLLLGGLVRSVAHEARADWSGPSRAAEAYHLAAGAGAYVGYWVAMLTLYWVGVRRLCRRRTGGYRVQV.

Residues 1-25 lie on the Cytoplasmic side of the membrane; that stretch reads MRQQDAPKPTPAACRCSGLARRVLT. A helical transmembrane segment spans residues 26 to 46; sequence IAFALLILGLMTWAYAAGVPL. The Extracellular segment spans residues 47-52; that stretch reads ASDRYG. Residues 53 to 73 form a helical membrane-spanning segment; it reads LLAFGLYGAFLSAHLVAQSLF. Residues 74-399 are Cytoplasmic-facing; the sequence is AYLEHRRVAA…NALWWHRHHA (326 aa). Residues 400 to 420 form a helical membrane-spanning segment; that stretch reads WMTYEAVVSGLFPFFVAATVL. Residues 421–430 are Extracellular-facing; sequence RLFYAGRPWA. The helical transmembrane segment at 431–451 threads the bilayer; sequence LLWVLLCVQGVALAKAAFAAW. Topologically, residues 452–457 are cytoplasmic; that stretch reads LRGCLR. A helical transmembrane segment spans residues 458-478; sequence MVLLSLYAPLYMCGLLPAKFL. Over 479 to 497 the chain is Extracellular; it reads ALVTMNQSGWGTSGRRKLA. The helical transmembrane segment at 498–518 threads the bilayer; that stretch reads ANYVPLLPLALWALLLLGGLV. The Cytoplasmic segment spans residues 519–540; it reads RSVAHEARADWSGPSRAAEAYH. A helical membrane pass occupies residues 541 to 561; it reads LAAGAGAYVGYWVAMLTLYWV. The Extracellular portion of the chain corresponds to 562–578; it reads GVRRLCRRRTGGYRVQV.

It belongs to the NodC/HAS family. The cofactor is Mg(2+). Widely expressed. Highly expressed in ovary followed by spleen, thymus, prostate, testes and large intestine. Weakly expressed in small intestine.

Its subcellular location is the membrane. The enzyme catalyses [hyaluronan](n) + UDP-N-acetyl-alpha-D-glucosamine = N-acetyl-beta-D-glucosaminyl-(1-&gt;4)-[hyaluronan](n) + UDP + H(+). The catalysed reaction is N-acetyl-beta-D-glucosaminyl-(1-&gt;4)-[hyaluronan](n) + UDP-alpha-D-glucuronate = [hyaluronan](n+1) + UDP + H(+). It functions in the pathway glycan biosynthesis; hyaluronan biosynthesis. In terms of biological role, catalyzes the addition of GlcNAc or GlcUA monosaccharides to the nascent hyaluronan polymer. Therefore, it is essential to hyaluronan synthesis a major component of most extracellular matrices that has a structural role in tissues architectures and regulates cell adhesion, migration and differentiation. This is one of the isozymes catalyzing that reaction. Also able to catalyze the synthesis of chito-oligosaccharide depending on the substrate. The protein is Hyaluronan synthase 1 (HAS1) of Homo sapiens (Human).